The following is a 399-amino-acid chain: Transaminase BacF (399 aa).

Pyridoxal 5'-phosphate-binding positions include 103 to 104, Tyr128, Asn178, Tyr209, and 236 to 238; these read GK and SFS. Lys239 bears the N6-(pyridoxal phosphate)lysine mark. Residue Arg247 participates in pyridoxal 5'-phosphate binding.

The protein belongs to the class-I pyridoxal-phosphate-dependent aminotransferase family. In terms of assembly, homodimer. Pyridoxal 5'-phosphate is required as a cofactor.

Its subcellular location is the cytoplasm. The protein operates within antibiotic biosynthesis; bacilysin biosynthesis. Its function is as follows. Part of the bacABCDEF operon responsible for the biosynthesis of the nonribosomally synthesized dipeptide antibiotic bacilysin, composed of L-alanine and L-anticapsin. Bacilysin is an irreversible inactivator of the glutaminase domain of glucosamine synthetase. Catalyzes the reductive amination of the C2 ketone of tetrahydro-hydroxyphenylpyruvate (H4HPP), with L-Phe as an amino donor, to yield tetrahydrotyrosine (H4Tyr) diastereomer. D-Phe is not an effective amino donor. BacF associated to BacG converts 3E,7R- and 3Z,7R-ex-H2HPP to 2S,4R,7R- and 2S,4S,7R-H4Tyr, respectively. Given that bacilysin has the 2S,4S stereochemistry in its anticapsin moiety, it is likely that the 2S,4S-H4Tyr is the diastereomer used for the biosynthesis. This Bacillus subtilis (strain 168) protein is Transaminase BacF.